The sequence spans 562 residues: NAD-dependent malic enzyme (562 aa).

Y101 serves as the catalytic Proton donor. R154 is an NAD(+) binding site. The active-site Proton acceptor is the K172. A divalent metal cation is bound by residues E243, D244, and D267. NAD(+)-binding residues include D267 and N415.

The protein belongs to the malic enzymes family. In terms of assembly, homotetramer. Requires Mg(2+) as cofactor. The cofactor is Mn(2+).

The catalysed reaction is (S)-malate + NAD(+) = pyruvate + CO2 + NADH. It catalyses the reaction oxaloacetate + H(+) = pyruvate + CO2. In Aliivibrio salmonicida (strain LFI1238) (Vibrio salmonicida (strain LFI1238)), this protein is NAD-dependent malic enzyme.